The primary structure comprises 332 residues: Glycerol-3-phosphate dehydrogenase [NAD(P)+] (332 aa).

Residues W11, R30, and K108 each coordinate NADPH. Sn-glycerol 3-phosphate is bound by residues K108, G137, and S139. A141 is a binding site for NADPH. K192, D245, S255, R256, and N257 together coordinate sn-glycerol 3-phosphate. The active-site Proton acceptor is the K192. R256 contributes to the NADPH binding site. NADPH is bound by residues V280 and E282.

This sequence belongs to the NAD-dependent glycerol-3-phosphate dehydrogenase family.

It is found in the cytoplasm. It carries out the reaction sn-glycerol 3-phosphate + NAD(+) = dihydroxyacetone phosphate + NADH + H(+). The enzyme catalyses sn-glycerol 3-phosphate + NADP(+) = dihydroxyacetone phosphate + NADPH + H(+). It participates in membrane lipid metabolism; glycerophospholipid metabolism. Functionally, catalyzes the reduction of the glycolytic intermediate dihydroxyacetone phosphate (DHAP) to sn-glycerol 3-phosphate (G3P), the key precursor for phospholipid synthesis. The polypeptide is Glycerol-3-phosphate dehydrogenase [NAD(P)+] (Burkholderia multivorans (strain ATCC 17616 / 249)).